Consider the following 158-residue polypeptide: Transcription elongation factor GreA (158 aa).

Residues 14–76 are a coiled coil; it reads VKKLEEELEY…QIENMLKNAN (63 aa).

Belongs to the GreA/GreB family.

Necessary for efficient RNA polymerase transcription elongation past template-encoded arresting sites. The arresting sites in DNA have the property of trapping a certain fraction of elongating RNA polymerases that pass through, resulting in locked ternary complexes. Cleavage of the nascent transcript by cleavage factors such as GreA or GreB allows the resumption of elongation from the new 3'terminus. GreA releases sequences of 2 to 3 nucleotides. The polypeptide is Transcription elongation factor GreA (Clostridium acetobutylicum (strain ATCC 824 / DSM 792 / JCM 1419 / IAM 19013 / LMG 5710 / NBRC 13948 / NRRL B-527 / VKM B-1787 / 2291 / W)).